A 380-amino-acid polypeptide reads, in one-letter code: Pectin lyase (380 aa).

A signal peptide spans 1 to 20 (MRSASILSAALAAFAPLASA). Asn-130 carries an N-linked (GlcNAc...) asparagine glycan.

It belongs to the polysaccharide lyase 1 family.

The protein localises to the secreted. It carries out the reaction Eliminative cleavage of (1-&gt;4)-alpha-D-galacturonan methyl ester to give oligosaccharides with 4-deoxy-6-O-methyl-alpha-D-galact-4-enuronosyl groups at their non-reducing ends.. The polypeptide is Pectin lyase (PNLA) (Colletotrichum gloeosporioides (Anthracnose fungus)).